Consider the following 40-residue polypeptide: U2-myrmicitoxin-Tb1a (40 aa).

The signal sequence occupies residues 1 to 3 (AEA). A propeptide spanning residues 4 to 29 (MAEAMADAMADAMADAMADAMAEAAA) is cleaved from the precursor. Arg39 bears the Arginine amide mark.

Belongs to the formicidae venom precursor-01 superfamily. As to expression, expressed by the venom gland.

The protein resides in the secreted. Functionally, venom protein with unknown function. Does not induce paralysis when a high dose is administered by intrathoracic injection into the blowfly Lucilia caesar. This chain is U2-myrmicitoxin-Tb1a, found in Tetramorium bicarinatum (Tramp ant).